The sequence spans 1489 residues: DEAD-box ATP-dependent DNA helicase Fancm (1489 aa).

Residues 65–237 (IVQSALFKNT…AVCRNLYISN (173 aa)) form the Helicase ATP-binding domain. Residue 78-85 (LPTGLGKT) coordinates ATP. The DEAH box signature appears at 185–188 (DEAH). The 167-residue stretch at 418–584 (KLRQVLVQHF…VVKLSLYEQN (167 aa)) folds into the Helicase C-terminal domain. Disordered regions lie at residues 591 to 647 (KFQP…ESQQ), 980 to 1000 (VEES…ESNH), 1145 to 1182 (TETI…PQGK), 1196 to 1222 (VLPC…SIQE), 1255 to 1293 (NPTI…PQIA), and 1452 to 1489 (ERRK…VLID). Residues 594–610 (PKCEEKHMEPVAEEKPK) are compositionally biased toward basic and acidic residues. Over residues 611-625 (PKSAAKTKESRKRKQ) the composition is skewed to basic residues. Over residues 985–998 (RSTPISIADSSGES) the composition is skewed to polar residues. The segment covering 1149–1161 (KNSENKNSHEDGS) has biased composition (basic and acidic residues). Residues 1480 to 1489 (SDEDDVVLID) are compositionally biased toward acidic residues.

Belongs to the DEAD box helicase family. DEAH subfamily. FANCM sub-subfamily.

Its subcellular location is the nucleus. It catalyses the reaction ATP + H2O = ADP + phosphate + H(+). The enzyme catalyses Couples ATP hydrolysis with the unwinding of duplex DNA by translocating in the 3'-5' direction.. Its function is as follows. A ssDNA-dependent ATPase with 3' to 5' helicase activity. Involved in multiple DNA-damage responses, some that require ATPase and helicase activity and some that are independent of these. Involved in DNA interstrand cross-link repair, probably together with Fancl and other Fanconi anemia pathway homologs. Independent of Fancl involved in DNA double strand break repair, including contributing to the synthesis-dependent strand annealing (SDSA) pathway. Probably contributes to SDSA by unwinding short duplex regions in complex D-loop-like DNA structures. The chain is DEAD-box ATP-dependent DNA helicase Fancm from Drosophila melanogaster (Fruit fly).